Consider the following 101-residue polypeptide: NRDVAACARFIDDFCDTLTPNIYRPRDNGQRCYAVNGHRCDFTVFNTNNGGNPIRASTPNCKTVLRTAANRCPTGGRGKINPNAPFLFAIDPNDGDCSTNF.

Has antiviral activity against tobacco mosaic virus and antitumor activity. The polypeptide is Antiviral protein CAP (Coprinus comatus (Shaggy mane)).